Consider the following 466-residue polypeptide: Asparagine--tRNA ligase (466 aa).

The protein belongs to the class-II aminoacyl-tRNA synthetase family. In terms of assembly, homodimer.

It localises to the cytoplasm. The catalysed reaction is tRNA(Asn) + L-asparagine + ATP = L-asparaginyl-tRNA(Asn) + AMP + diphosphate + H(+). This Yersinia enterocolitica serotype O:8 / biotype 1B (strain NCTC 13174 / 8081) protein is Asparagine--tRNA ligase.